Here is a 621-residue protein sequence, read N- to C-terminus: MVLCPVIGKLLHKRVVLASASPRRQEILSNAGLRFEVVPSKFKEKLDKASFATPYGYAMETAKQKALEVANRLYQKDLRAPDVVIGADTIVTVGGLILEKPVDKQDAYRMLSRLSGREHSVFTGVAIVHCSSKDHQLDTRVSEFYEETKVKFSELSEELLWEYVHSGEPMDKAGGYGIQALGGMLVESVHGDFLNVVGFPLNHFCKQLVKLYYPPRPEDLRRSVKHDSIPAADTFEDLSDVEGGGSEPTQRDAGSRDEKAEAGEAGQATAEAECHRTRETLPPFPTRLLELIEGFMLSKGLLTACKLKVFDLLKDEAPQKAADIASKVDASACGMERLLDICAAMGLLEKTEQGYSNTETANVYLASDGEYSLHGFIMHNNDLTWNLFTYLEFAIREGTNQHHRALGKKAEDLFQDAYYQSPETRLRFMRAMHGMTKLTACQVATAFNLSRFSSACDVGGCTGALARELAREYPRMQVTVFDLPDIIELAAHFQPPGPQAVQIHFAAGDFFRDPLPSAELYVLCRILHDWPDDKVHKLLSRVAESCKPGAGLLLVETLLDEEKRVAQRALMQSLNMLVQTEGKERSLGEYQCLLELHGFHQVQVVHLGGVLDAILATKVAP.

Residues 11–223 form an MAF-like region; sequence LHKRVVLASA…PPRPEDLRRS (213 aa). Residue S21 is modified to Phosphoserine. Residue D88 is the Proton acceptor; for pyrophosphatase activity of the active site. At S228 the chain carries Phosphoserine. T234 is modified (phosphothreonine). The segment at 235 to 279 is disordered; that stretch reads FEDLSDVEGGGSEPTQRDAGSRDEKAEAGEAGQATAEAECHRTRE. The residue at position 239 (S239) is a Phosphoserine. Basic and acidic residues predominate over residues 249–262; the sequence is TQRDAGSRDEKAEA. The ASMT-like stretch occupies residues 277–621; it reads TRETLPPFPT…DAILATKVAP (345 aa). S421 bears the Phosphoserine mark. Residues D482, 508 to 510, and R525 contribute to the S-adenosyl-L-methionine site; that span reads GDF.

It in the N-terminal section; belongs to the Maf family. YhdE subfamily. In the C-terminal section; belongs to the class I-like SAM-binding methyltransferase superfamily. Cation-independent O-methyltransferase family. As to quaternary structure, homodimer. It depends on a divalent metal cation as a cofactor. In terms of tissue distribution, widely expressed. In adult, highly expressed in pancreas, placenta, fibroblast, thymus, prostate, testis, ovary and colon. Expressed at lower levels in spleen, small intestine and leukocytes. In fetus, expressed at high levels in the lung and kidney and at lower level in brain and liver.

The catalysed reaction is dTTP + H2O = dTMP + diphosphate + H(+). The enzyme catalyses UTP + H2O = UMP + diphosphate + H(+). It catalyses the reaction CTP + H2O = CMP + diphosphate + H(+). It carries out the reaction psi-UTP + H2O = psi-UMP + diphosphate + H(+). The catalysed reaction is 5-methyl-UTP + H2O = 5-methyl-UMP + diphosphate + H(+). The enzyme catalyses 5-methyl-CTP + H2O = 5-methyl-CMP + diphosphate + H(+). Its function is as follows. Nucleoside triphosphate pyrophosphatase that hydrolyzes dTTP and UTP. Can also hydrolyze CTP and the modified nucleotides pseudo-UTP, 5-methyl-UTP (m(5)UTP) and 5-methyl-CTP (m(5)CTP). Has weak activity with dCTP, 8-oxo-GTP and N(4)-methyl-dCTP. May have a dual role in cell division arrest and in preventing the incorporation of modified nucleotides into cellular nucleic acids. In addition, the presence of the putative catalytic domain of S-adenosyl-L-methionine binding in the C-terminal region argues for a methyltransferase activity. This chain is Probable bifunctional dTTP/UTP pyrophosphatase/methyltransferase protein (ASMTL), found in Homo sapiens (Human).